A 201-amino-acid chain; its full sequence is Guanylate kinase (201 aa).

The Guanylate kinase-like domain occupies 7–186 (GVLLVLSSPS…SVEEISSILN (180 aa)). An ATP-binding site is contributed by 14–21 (SPSGAGKT).

The protein belongs to the guanylate kinase family.

The protein localises to the cytoplasm. It carries out the reaction GMP + ATP = GDP + ADP. Its function is as follows. Essential for recycling GMP and indirectly, cGMP. This Wolbachia pipientis wMel protein is Guanylate kinase.